The following is a 514-amino-acid chain: Cobyric acid synthase (514 aa).

One can recognise a GATase cobBQ-type domain in the interval 263 to 457 (ALDVAVIRLP…LHGIFDNDPL (195 aa)). Cysteine 344 serves as the catalytic Nucleophile. Residue histidine 449 is part of the active site.

Belongs to the CobB/CobQ family. CobQ subfamily.

The protein operates within cofactor biosynthesis; adenosylcobalamin biosynthesis. Functionally, catalyzes amidations at positions B, D, E, and G on adenosylcobyrinic A,C-diamide. NH(2) groups are provided by glutamine, and one molecule of ATP is hydrogenolyzed for each amidation. The sequence is that of Cobyric acid synthase from Desulfitobacterium hafniense (strain DSM 10664 / DCB-2).